A 1188-amino-acid polypeptide reads, in one-letter code: DNA-directed RNA polymerase subunit beta (1188 aa).

This sequence belongs to the RNA polymerase beta chain family. In terms of assembly, the RNAP catalytic core consists of 2 alpha, 1 beta, 1 beta' and 1 omega subunit. When a sigma factor is associated with the core the holoenzyme is formed, which can initiate transcription.

It carries out the reaction RNA(n) + a ribonucleoside 5'-triphosphate = RNA(n+1) + diphosphate. Its function is as follows. DNA-dependent RNA polymerase catalyzes the transcription of DNA into RNA using the four ribonucleoside triphosphates as substrates. This Streptococcus equi subsp. zooepidemicus (strain H70) protein is DNA-directed RNA polymerase subunit beta.